Reading from the N-terminus, the 78-residue chain is Small ribosomal subunit protein bS16c (78 aa).

It belongs to the bacterial ribosomal protein bS16 family.

Its subcellular location is the plastid. The protein localises to the chloroplast. The chain is Small ribosomal subunit protein bS16c from Amborella trichopoda.